The chain runs to 423 residues: Gamma-glutamyl phosphate reductase (423 aa).

It belongs to the gamma-glutamyl phosphate reductase family.

It localises to the cytoplasm. It catalyses the reaction L-glutamate 5-semialdehyde + phosphate + NADP(+) = L-glutamyl 5-phosphate + NADPH + H(+). The protein operates within amino-acid biosynthesis; L-proline biosynthesis; L-glutamate 5-semialdehyde from L-glutamate: step 2/2. Catalyzes the NADPH-dependent reduction of L-glutamate 5-phosphate into L-glutamate 5-semialdehyde and phosphate. The product spontaneously undergoes cyclization to form 1-pyrroline-5-carboxylate. This is Gamma-glutamyl phosphate reductase from Magnetococcus marinus (strain ATCC BAA-1437 / JCM 17883 / MC-1).